Consider the following 423-residue polypeptide: UPF0229 protein PSPPH_0628 (423 aa).

The segment at 65 to 110 (HHGRGGKQTVVHPGNKEFTTGEHIARPQGGGGGKGPGKAGNSGEGM) is disordered. The segment covering 92–107 (QGGGGGKGPGKAGNSG) has biased composition (gly residues).

Belongs to the UPF0229 family.

This Pseudomonas savastanoi pv. phaseolicola (strain 1448A / Race 6) (Pseudomonas syringae pv. phaseolicola (strain 1448A / Race 6)) protein is UPF0229 protein PSPPH_0628.